A 254-amino-acid polypeptide reads, in one-letter code: MQIVCHQVPVLAGSATLATMGTLILCLGKPASYGKHTESVSSGVPFLPARIAWFLQELPSFVVSVGMLAWQPRSLFGPPGNVLLALFSAHYFHRTFIYSLLTRGRPFPAVLFLRATAFCIGNGLLQAYYLVYCAEYPEEWYTDVRFSFGVFLFILGMGINIHSDYTLRQLRKPGEVIYRIPRGGLFTYVSGANFLGEIIEWIGYALATWSVPAFAFAFFTLCFLGMQAFYHHRFYLKMFKDYPKSRKALIPFIF.

4 consecutive transmembrane segments (helical) span residues 8-28 (VPVLAGSATLATMGTLILCLG), 72-92 (PRSLFGPPGNVLLALFSAHYF), 146-166 (FSFGVFLFILGMGINIHSDYT), and 206-226 (LATWSVPAFAFAFFTLCFLGM).

This sequence belongs to the steroid 5-alpha reductase family. In terms of tissue distribution, expressed in high levels in the prostate and many other androgen-sensitive tissues.

The protein resides in the microsome membrane. It localises to the endoplasmic reticulum membrane. The catalysed reaction is a 3-oxo-5alpha-steroid + NADP(+) = a 3-oxo-Delta(4)-steroid + NADPH + H(+). The enzyme catalyses 17beta-hydroxy-5alpha-androstan-3-one + NADP(+) = testosterone + NADPH + H(+). It carries out the reaction 5alpha-pregnane-3,20-dione + NADP(+) = progesterone + NADPH + H(+). In terms of biological role, converts testosterone (T) into 5-alpha-dihydrotestosterone (DHT) and progesterone or corticosterone into their corresponding 5-alpha-3-oxosteroids. It plays a central role in sexual differentiation and androgen physiology. In Rattus norvegicus (Rat), this protein is 3-oxo-5-alpha-steroid 4-dehydrogenase 2 (Srd5a2).